The chain runs to 92 residues: Acylphosphatase (92 aa).

Positions 5–92 (RVKVKVNGRV…GVFERFEVRF (88 aa)) constitute an Acylphosphatase-like domain. Catalysis depends on residues R20 and N38.

This sequence belongs to the acylphosphatase family.

The enzyme catalyses an acyl phosphate + H2O = a carboxylate + phosphate + H(+). The chain is Acylphosphatase (acyP) from Syntrophotalea carbinolica (strain DSM 2380 / NBRC 103641 / GraBd1) (Pelobacter carbinolicus).